A 161-amino-acid polypeptide reads, in one-letter code: Hydrogenase expression/formation protein HoxO (161 aa).

Belongs to the HupG/HyaE family.

The polypeptide is Hydrogenase expression/formation protein HoxO (hoxO) (Cupriavidus necator (strain ATCC 17699 / DSM 428 / KCTC 22496 / NCIMB 10442 / H16 / Stanier 337) (Ralstonia eutropha)).